A 458-amino-acid polypeptide reads, in one-letter code: Retinoic acid receptor gamma (458 aa).

A modulating region spans residues 1-89; that stretch reads MATNKERLFA…PPPPPRVYKP (89 aa). The residue at position 34 (R34) is an Omega-N-methylarginine. Residues 58 to 83 form a disordered region; the sequence is MASLSVETQSTSSEEMVPSSPSPPPP. Positions 62-71 are enriched in polar residues; the sequence is SVETQSTSSE. 2 consecutive NR C4-type zinc fingers follow at residues 90–110 and 126–150; these read CFVC…CEGC and CHRD…LQKC. Residues 90-155 constitute a DNA-binding region (nuclear receptor); it reads CFVCNDKSSG…RLQKCFEVGM (66 aa). The segment at 156–184 is hinge; that stretch reads SKEAVRNDRNKKKKEVKEEGSPDSYELSP. Residues 161–180 are disordered; it reads RNDRNKKKKEVKEEGSPDSY. Residues K172 and K401 each participate in a glycyl lysine isopeptide (Lys-Gly) (interchain with G-Cter in SUMO2) cross-link. The NR LBD domain maps to 185 to 419; that stretch reads QLEELITKVS…PLIREMLENP (235 aa). The tract at residues 409–458 is disordered; that stretch reads PPLIREMLENPEMFEDDSSKPGPHPKASSEDEAPGGQGKRGQSPQPDQGP. Over residues 448–458 the composition is skewed to polar residues; the sequence is RGQSPQPDQGP.

The protein belongs to the nuclear hormone receptor family. NR1 subfamily. As to quaternary structure, homodimer. Heterodimer with a RXR molecule. Binds DNA preferentially as a RAR/RXR heterodimer. Forms a complex with PUS1 and the SRA1 RNA in the nucleus.

It is found in the nucleus. The protein localises to the cytoplasm. Receptor for retinoic acid. Retinoic acid receptors bind as heterodimers to their target response elements in response to their ligands, all-trans or 9-cis retinoic acid, and regulate gene expression in various biological processes. The RAR/RXR heterodimers bind to the retinoic acid response elements (RARE) composed of tandem 5'-AGGTCA-3' sites known as DR1-DR5. In the absence of ligand, acts mainly as an activator of gene expression due to weak binding to corepressors. Required for limb bud development. In concert with RARA or RARB, required for skeletal growth, matrix homeostasis and growth plate function. The polypeptide is Retinoic acid receptor gamma (Rarg) (Mus musculus (Mouse)).